The following is a 297-amino-acid chain: Calponin-1 (297 aa).

The Calponin-homology (CH) domain maps to 28–131; sequence HQREQELREW…STLLALASMA (104 aa). Calponin-like repeat units lie at residues 164–189, 204–229, and 243–268; these read IGLQ…RHLY, ISLQ…RQIF, and VSLQ…RQVY. Threonine 170 carries the post-translational modification Phosphothreonine; by ROCK2. Phosphoserine; by ROCK2 is present on serine 175. Residues threonine 180 and threonine 184 each carry the phosphothreonine; by ROCK2 modification. A Phosphothreonine; by ROCK2 modification is found at threonine 259.

The protein belongs to the calponin family.

Thin filament-associated protein that is implicated in the regulation and modulation of smooth muscle contraction. It is capable of binding to actin, calmodulin and tropomyosin. The interaction of calponin with actin inhibits the actomyosin Mg-ATPase activity. The sequence is that of Calponin-1 (CNN1) from Bos taurus (Bovine).